Here is a 311-residue protein sequence, read N- to C-terminus: Olfactory receptor 1073 (311 aa).

Residues 1–25 (MKQQNDTQILQFLLLGLSENTELQP) lie on the Extracellular side of the membrane. N-linked (GlcNAc...) asparagine glycosylation is present at Asn5. The chain crosses the membrane as a helical span at residues 26–46 (LIYWLFFSMYLVTVWGNLIII). Over 47–57 (LATVLDFRLHT) the chain is Cytoplasmic. The helical transmembrane segment at 58–78 (AMYFFLCNLSFVDICLISTTI) threads the bilayer. Over 79-97 (PKMLANVHLNHKAITYEGC) the chain is Extracellular. Cys97 and Cys179 are joined by a disulfide. A helical membrane pass occupies residues 98 to 118 (IMQIYFFTLFVGLDNFLLAVM). The Cytoplasmic segment spans residues 119-133 (AYDRFVAICHPLRYT). The chain crosses the membrane as a helical span at residues 134 to 154 (SIMTPHLCMSLVLVSWIASVL). Asn155 carries N-linked (GlcNAc...) asparagine glycosylation. Residues 155-196 (NSSLQSFLVLQLSFCTEVEIPHFFCELSMLVHLACSDTFLSD) are Extracellular-facing. The helical transmembrane segment at 197 to 217 (MAMNVLAALLGGGCLVGILYS) threads the bilayer. Topologically, residues 218 to 244 (YSKIVSSIQAISSAEGKYKAFSTCVSH) are cytoplasmic. The chain crosses the membrane as a helical span at residues 245-265 (LSVVSLFYCTLLGVYLSSAVT). The Extracellular segment spans residues 266 to 271 (QNSHST). Residues 272-292 (AATSLMYTVVTPMLNPFIYSL) form a helical membrane-spanning segment. At 293–311 (RNDNIKRALKNFVKKKLEK) the chain is on the cytoplasmic side.

It belongs to the G-protein coupled receptor 1 family. As to expression, tongue specific.

Its subcellular location is the cell membrane. In terms of biological role, possible taste receptor. This chain is Olfactory receptor 1073 (Olr1073), found in Rattus norvegicus (Rat).